The sequence spans 429 residues: Enolase 1 (429 aa).

Residue glutamine 163 coordinates (2R)-2-phosphoglycerate. Glutamate 205 (proton donor) is an active-site residue. Mg(2+) contacts are provided by aspartate 242, glutamate 287, and aspartate 314. (2R)-2-phosphoglycerate-binding residues include lysine 339, arginine 368, serine 369, and lysine 390. Lysine 339 acts as the Proton acceptor in catalysis.

The protein belongs to the enolase family. Mg(2+) is required as a cofactor.

It localises to the cytoplasm. The protein localises to the secreted. It is found in the cell surface. The enzyme catalyses (2R)-2-phosphoglycerate = phosphoenolpyruvate + H2O. Its pathway is carbohydrate degradation; glycolysis; pyruvate from D-glyceraldehyde 3-phosphate: step 4/5. In terms of biological role, catalyzes the reversible conversion of 2-phosphoglycerate (2-PG) into phosphoenolpyruvate (PEP). It is essential for the degradation of carbohydrates via glycolysis. This is Enolase 1 from Cupriavidus metallidurans (strain ATCC 43123 / DSM 2839 / NBRC 102507 / CH34) (Ralstonia metallidurans).